The primary structure comprises 593 residues: ESX-1 secretion system protein EccCb1 (593 aa).

FtsK domains lie at 66–260 and 350–546; these read RQEV…NETQ and QVPL…EKND. ATP is bound by residues 85 to 92 and 377 to 384; these read GAPQTGKS and GAPKSGKT.

In terms of assembly, part of the ESX-1 / type VII secretion system (T7SS), which is composed of cytosolic and membrane components. The ESX-1 membrane complex is composed of EccB1, EccCa1, EccCb1, EccD1 and EccE1.

The protein resides in the cytoplasm. In terms of biological role, part of the ESX-1 / type VII specialized secretion system (T7SS), which exports several proteins including EsxA and EsxB. Plays a role in DNA conjugation, in both donor and recipient strains. The sequence is that of ESX-1 secretion system protein EccCb1 (eccCb1) from Mycolicibacterium smegmatis (strain MKD8) (Mycobacterium smegmatis).